The primary structure comprises 78 residues: WAP four-disulfide core domain protein 12 (78 aa).

A signal peptide spans 1–21 (MWPNSILVLTVLLISSTLVTG). In terms of domain architecture, WAP spans 25-72 (KGAEKGVCPPDNVRCIRGEDPQCHNDNDCKDQKICCYWHCGFKCVQPV). Intrachain disulfides connect Cys32–Cys60, Cys39–Cys64, Cys47–Cys59, and Cys53–Cys68.

The protein resides in the secreted. Its function is as follows. Antibacterial protein. Putative acid-stable proteinase inhibitor. This Rattus norvegicus (Rat) protein is WAP four-disulfide core domain protein 12.